Reading from the N-terminus, the 205-residue chain is Protein N-terminal glutamine amidohydrolase (205 aa).

Catalysis depends on residues Cys-20, His-74, and Asp-90.

It belongs to the NTAQ1 family. In terms of assembly, monomer.

The catalysed reaction is N-terminal L-glutaminyl-[protein] + H2O = N-terminal L-glutamyl-[protein] + NH4(+). Mediates the side-chain deamidation of N-terminal glutamine residues to glutamate, an important step in N-end rule pathway of protein degradation. Conversion of the resulting N-terminal glutamine to glutamate renders the protein susceptible to arginylation, polyubiquitination and degradation as specified by the N-end rule. Does not act on substrates with internal or C-terminal glutamine and does not act on non-glutamine residues in any position. This Drosophila willistoni (Fruit fly) protein is Protein N-terminal glutamine amidohydrolase (tun).